The following is a 981-amino-acid chain: uncharacterized protein (981 aa).

Disordered stretches follow at residues 65 to 133, 149 to 463, 491 to 580, 592 to 834, and 861 to 891; these read NIDN…SNNS, SSNS…NKIE, SNNI…DSPL, EQTN…LNQV, and VQND…NDGN. A compositionally biased stretch (acidic residues) spans 75 to 88; that stretch reads SSDDDDDDDDDDDY. 3 stretches are compositionally biased toward low complexity: residues 89-133, 149-158, and 170-181; these read NNNN…SNNS, SSNSINNNDN, and SAKTTSSLTSSK. The segment covering 182-195 has biased composition (basic and acidic residues); it reads RSLDSRNRNRDRSY. A compositionally biased stretch (basic residues) spans 196-206; the sequence is TRSRSRSRSRS. Residues 207–227 show a composition bias toward low complexity; it reads YSRGFSSLSRSRSRSRSISSR. Residues 228-269 are compositionally biased toward basic residues; the sequence is SRSRSRSRRSRSRSSRSRSRSRSKSKSKSRRSRSRSRSRRSR. The segment covering 270-292 has biased composition (basic and acidic residues); sequence SRSDSRSRSDSRGRSRSRSDSRK. Basic residues predominate over residues 314 to 358; the sequence is SSKRHQNSRKRNRSYSRSRTRSWSRSRTRSRSRRRYGGRTFRSPR. A compositionally biased stretch (basic and acidic residues) spans 359–452; it reads RSRDDSRDRG…SQSPHNEKNK (94 aa). Over residues 491 to 553 the composition is skewed to low complexity; sequence SNNINNNNIK…SHNNTNGNVN (63 aa). Polar residues-rich tracts occupy residues 554 to 576 and 605 to 622; these read GVSK…STDL and ESNN…SSTE. A compositionally biased stretch (basic and acidic residues) spans 623–634; that stretch reads NENKNRENEKNN. Composition is skewed to low complexity over residues 635–820 and 867–891; these read SENS…NNNS and SSPI…NDGN.

This is an uncharacterized protein from Dictyostelium discoideum (Social amoeba).